We begin with the raw amino-acid sequence, 323 residues long: Mitochondrial glutamate carrier 1 (323 aa).

3 Solcar repeats span residues Ile6–Gln93, Leu101–Leu214, and Ser223–Glu312. Helical transmembrane passes span Leu12–Ala32, Tyr62–Ile82, Met107–Leu127, Gly189–Ala209, Ser223–Val243, and Ala292–Glu312.

It belongs to the mitochondrial carrier (TC 2.A.29) family. In terms of tissue distribution, expressed at high levels in brain, liver, and pancreas.

It is found in the mitochondrion inner membrane. The enzyme catalyses L-glutamate(in) + H(+)(in) = L-glutamate(out) + H(+)(out). Its function is as follows. Mitochondrial glutamate/H(+) symporter. Responsible for the transport of glutamate from the cytosol into the mitochondrial matrix with the concomitant import of a proton. Plays a role in the control of glucose-stimulated insulin secretion. In Homo sapiens (Human), this protein is Mitochondrial glutamate carrier 1.